Reading from the N-terminus, the 280-residue chain is 2,3,4,5-tetrahydropyridine-2,6-dicarboxylate N-succinyltransferase (280 aa).

Residues arginine 109 and aspartate 146 each contribute to the substrate site.

This sequence belongs to the transferase hexapeptide repeat family. As to quaternary structure, homotrimer.

The protein localises to the cytoplasm. It catalyses the reaction (S)-2,3,4,5-tetrahydrodipicolinate + succinyl-CoA + H2O = (S)-2-succinylamino-6-oxoheptanedioate + CoA. Its pathway is amino-acid biosynthesis; L-lysine biosynthesis via DAP pathway; LL-2,6-diaminopimelate from (S)-tetrahydrodipicolinate (succinylase route): step 1/3. This is 2,3,4,5-tetrahydropyridine-2,6-dicarboxylate N-succinyltransferase from Blochmanniella floridana.